A 270-amino-acid chain; its full sequence is Ribosomal RNA small subunit methyltransferase J (270 aa).

Residues 126–127 (ER) and D182 contribute to the S-adenosyl-L-methionine site.

Belongs to the methyltransferase superfamily. RsmJ family.

It is found in the cytoplasm. The enzyme catalyses guanosine(1516) in 16S rRNA + S-adenosyl-L-methionine = N(2)-methylguanosine(1516) in 16S rRNA + S-adenosyl-L-homocysteine + H(+). Functionally, specifically methylates the guanosine in position 1516 of 16S rRNA. The protein is Ribosomal RNA small subunit methyltransferase J of Acinetobacter baylyi (strain ATCC 33305 / BD413 / ADP1).